Here is a 215-residue protein sequence, read N- to C-terminus: 2-phospho-L-lactate guanylyltransferase (215 aa).

The protein belongs to the CofC family. As to quaternary structure, homodimer.

It carries out the reaction (2S)-2-phospholactate + GTP + H(+) = (2S)-lactyl-2-diphospho-5'-guanosine + diphosphate. The protein operates within cofactor biosynthesis; coenzyme F420 biosynthesis. Its function is as follows. Guanylyltransferase that catalyzes the activation of (2S)-2-phospholactate (2-PL) as (2S)-lactyl-2-diphospho-5'-guanosine, via the condensation of 2-PL with GTP. It is involved in the biosynthesis of coenzyme F420, a hydride carrier cofactor. In Methanoculleus marisnigri (strain ATCC 35101 / DSM 1498 / JR1), this protein is 2-phospho-L-lactate guanylyltransferase.